Here is an 826-residue protein sequence, read N- to C-terminus: Zinc phosphodiesterase ELAC protein 2 (826 aa).

Residues 1 to 16 constitute a mitochondrion transit peptide; it reads MWALCSLLRSAAGRTM. Disordered stretches follow at residues 16-51 and 188-231; these read MSQG…PSGC and EQRR…VSQR. Residues 27–38 show a composition bias toward basic and acidic residues; it reads ARRERPRKDPLR. A phosphoserine mark is found at Ser199, Ser208, Ser212, Ser229, Ser618, and Ser736. The span at 208-224 shows a compositional bias: basic and acidic residues; sequence SPERSSDSESNENEPHL. A disordered region spans residues 798-826; that stretch reads ELAGGLEDGEPQQKRAHTEEPQAKKVRAQ. The span at 808–820 shows a compositional bias: basic and acidic residues; the sequence is PQQKRAHTEEPQA.

The protein belongs to the RNase Z family. As to quaternary structure, homodimer. Interacts with PTCD1. The cofactor is Zn(2+). In terms of tissue distribution, widely expressed. Highly expressed in heart, placenta, liver, skeletal muscle, kidney, pancreas, testis and ovary. Weakly expressed in brain, lung, spleen, thymus, prostate, small intestine, colon and leukocytes.

It localises to the mitochondrion. The protein localises to the mitochondrion matrix. Its subcellular location is the mitochondrion nucleoid. It is found in the nucleus. The catalysed reaction is Endonucleolytic cleavage of RNA, removing extra 3' nucleotides from tRNA precursor, generating 3' termini of tRNAs. A 3'-hydroxy group is left at the tRNA terminus and a 5'-phosphoryl group is left at the trailer molecule.. Functionally, zinc phosphodiesterase, which displays mitochondrial tRNA 3'-processing endonuclease activity. Involved in tRNA maturation, by removing a 3'-trailer from precursor tRNA. Associates with mitochondrial DNA complexes at the nucleoids to initiate RNA processing and ribosome assembly. The chain is Zinc phosphodiesterase ELAC protein 2 (ELAC2) from Homo sapiens (Human).